The following is a 405-amino-acid chain: Dynactin subunit 2 (405 aa).

The segment at 1-24 (MADPKYANLPGIASNEPDVYETSD) is disordered. 2 coiled-coil regions span residues 102 to 125 (QQKY…IQTS) and 379 to 405 (QQTM…KLNK).

It belongs to the dynactin subunit 2 family. Subunit of dynactin, a multiprotein complex part of a tripartite complex with dynein and a adapter, such as BICDL1, BICD2 or HOOK3. The dynactin complex is built around ACTR1A/ACTB filament and consists of an actin-related filament composed of a shoulder domain, a pointed end and a barbed end. Its length is defined by its flexible shoulder domain. The soulder is composed of 2 DCTN1 subunits, 4 DCTN2 and 2 DCTN3.

Its subcellular location is the cytoplasm. The protein localises to the cytoskeleton. The protein resides in the microtubule organizing center. It localises to the centrosome. It is found in the membrane. Its function is as follows. Part of the dynactin complex that activates the molecular motor dynein for ultra-processive transport along microtubules. In the dynactin soulder domain, binds the ACTR1A filament and acts as a molecular ruler to determine the length. Modulates cytoplasmic dynein binding to an organelle, and plays a role in prometaphase chromosome alignment and spindle organization during mitosis. Involved in anchoring microtubules to centrosomes. This is Dynactin subunit 2 (dctn2) from Danio rerio (Zebrafish).